A 1442-amino-acid chain; its full sequence is ABC transporter G family member 11 (1442 aa).

The ABC transporter 1 domain occupies 125 to 373 (LFTPSFWTKK…FMSLGFDCEP (249 aa)). The region spanning 478-718 (LNDKFGMYSK…EQGSLYFKGD (241 aa)) is the ABC transmembrane type-2 1 domain. Transmembrane regions (helical) follow at residues 482–502 (FGMY…ASLF), 518–538 (AILS…AMTF), 567–587 (IPFT…MFGL), 592–612 (GKFF…TALF), 627–647 (NISN…IPIP), and 737–757 (IIVY…MEYI). In terms of domain architecture, ABC transporter 2 spans 808–1052 (FTWQNIRYTV…LTSYFERHGV (245 aa)). 844-851 (GSSGAGKT) contacts ATP. The 226-residue stretch at 1144–1369 (YYTYGSFVQA…YNTCQNYTSA (226 aa)) folds into the ABC transmembrane type-2 2 domain. The next 6 membrane-spanning stretches (helical) occupy residues 1147-1167 (YGSF…FWNL), 1181-1201 (IFEA…QLII), 1220-1240 (FAIS…TIFF), 1259-1279 (FYFW…GQAV), 1286-1306 (MFFA…FCGV), and 1416-1436 (VGII…FVYL).

Belongs to the ABC transporter superfamily. ABCG family. PDR (TC 3.A.1.205) subfamily.

The protein localises to the membrane. The protein is ABC transporter G family member 11 (abcG11) of Dictyostelium discoideum (Social amoeba).